The chain runs to 587 residues: Phosphatidylinositol-3-phosphatase SAC1 (587 aa).

Residues 1–520 (MAATTYERLK…SPLSVPRDLK (520 aa)) lie on the Cytoplasmic side of the membrane. In terms of domain architecture, SAC spans 122 to 451 (MNHVLSMDGF…ANACAKQYAG (330 aa)). Residues 452–587 (TGALKTDFTR…PRLVQKEKID (136 aa)) are essential for phosphatidylinositol-4-phosphate phosphatase activity. N6-acetyllysine is present on lysine 456. Residues 521–541 (FLALPIIMVVAFSMCIICLLM) traverse the membrane as a helical segment. Residues 542-548 (AGDTWTE) are Lumenal-facing. Residues 549–569 (TLAYVLFWGVASIGTFFIILY) traverse the membrane as a helical segment. The Cytoplasmic portion of the chain corresponds to 570–587 (NGKDFVDAPRLVQKEKID).

In terms of assembly, interacts with TMEM39A. Interacts with SEC23A and SEC24A; this interaction is reduced in the absence of TMEM39A. Interacts with PLEKHA3 and VAPA and/or VAPB to form a ternary complex.

Its subcellular location is the endoplasmic reticulum membrane. The protein resides in the golgi apparatus membrane. It carries out the reaction a 1,2-diacyl-sn-glycero-3-phospho-(1D-myo-inositol-3-phosphate) + H2O = a 1,2-diacyl-sn-glycero-3-phospho-(1D-myo-inositol) + phosphate. It catalyses the reaction a 1,2-diacyl-sn-glycero-3-phospho-(1D-myo-inositol 4-phosphate) + H2O = a 1,2-diacyl-sn-glycero-3-phospho-(1D-myo-inositol) + phosphate. Its function is as follows. Phosphoinositide phosphatase which catalyzes the hydrolysis of phosphatidylinositol 4-phosphate (PtdIns(4)P), phosphatidylinositol 3-phosphate (PtdIns(3)P) and has low activity towards phosphatidylinositol-3,5-bisphosphate (PtdIns(3,5)P2). Shows a very robust PtdIns(4)P phosphatase activity when it binds PtdIns(4)P in a 'cis' configuration in the cellular environment, with much less activity seen when it binds PtdIns(4)P in 'trans' configuration. PtdIns(4)P phosphatase activity (when it binds PtdIns(4)P in 'trans' configuration) is enhanced in the presence of PLEKHA3. The chain is Phosphatidylinositol-3-phosphatase SAC1 (SACM1L) from Bos taurus (Bovine).